The chain runs to 590 residues: Hyaluronan synthase 1 (590 aa).

Over methionine 1 to methionine 31 the chain is Cytoplasmic. A helical membrane pass occupies residues isoleucine 32–phenylalanine 52. The Extracellular portion of the chain corresponds to glutamine 53–valine 60. The helical transmembrane segment at leucine 61–phenylalanine 81 threads the bilayer. The Cytoplasmic portion of the chain corresponds to alanine 82–histidine 401. Residues isoleucine 402–valine 422 form a helical membrane-spanning segment. At isoleucine 423–leucine 425 the chain is on the extracellular side. A helical membrane pass occupies residues leucine 426–valine 446. Over leucine 447–arginine 456 the chain is Cytoplasmic. A helical transmembrane segment spans residues glycine 457–proline 477. Residues serine 478–proline 505 lie on the Extracellular side of the membrane. Residues valine 506–methionine 526 form a helical membrane-spanning segment. Topologically, residues aspartate 527–histidine 543 are cytoplasmic. Residues leucine 544–valine 564 form a helical membrane-spanning segment. At tryptophan 565–valine 588 the chain is on the extracellular side.

It belongs to the NodC/HAS family. Mg(2+) serves as cofactor.

Its subcellular location is the membrane. It carries out the reaction [hyaluronan](n) + UDP-N-acetyl-alpha-D-glucosamine = N-acetyl-beta-D-glucosaminyl-(1-&gt;4)-[hyaluronan](n) + UDP + H(+). It catalyses the reaction N-acetyl-beta-D-glucosaminyl-(1-&gt;4)-[hyaluronan](n) + UDP-alpha-D-glucuronate = [hyaluronan](n+1) + UDP + H(+). The protein operates within glycan biosynthesis; hyaluronan biosynthesis. Catalyzes the addition of GlcNAc or GlcUA monosaccharides to the nascent hyaluronan polymer. Therefore, it is essential to hyaluronan synthesis a major component of most extracellular matrices that has a structural role in tissues architectures and regulates cell adhesion, migration and differentiation. Also able to catalyze the synthesis of chito-oligosaccharide depending on the substrate. This chain is Hyaluronan synthase 1 (has1), found in Xenopus tropicalis (Western clawed frog).